A 508-amino-acid chain; its full sequence is MFS-type transporter penM (508 aa).

Residues 1–60 (MKDGEETPSVDGSTSASNREKLGTDLEIGPVDLSDGGKEEKVKDPNLVDWDGPDDPENPL) are disordered. A compositionally biased stretch (basic and acidic residues) spans 35–46 (DGGKEEKVKDPN). Residue N61 is glycosylated (N-linked (GlcNAc...) asparagine). A helical transmembrane segment spans residues 73-93 (SIALITFLTPLGSSMFAPGVG). The N-linked (GlcNAc...) asparagine glycan is linked to N100. Helical transmembrane passes span 108 to 128 (SFVVSVYLLGYCFGPLIIAPL), 143 to 163 (ILYVIWTIACAFAPEIGSLVV), 166 to 186 (FFAGLAGSCPLTIGAGSIADM), 197 to 217 (AAWALGPLIGPVVGPVAGAYL), 225 to 245 (WSFYVLAMAAGAITISSLFSI), and 299 to 319 (PIVFLLSLYVGVIYGYLYLLF). The Peroxisomal targeting signal signature appears at 293–307 (KMLFRSPIVFLLSLY). N331 carries N-linked (GlcNAc...) asparagine glycosylation. Transmembrane regions (helical) follow at residues 335–355 (GAVGLTYLGLGVGSLIGLFLI), 379–399 (LPPMVPGAIFVPISLFMYGWT), 407–427 (IVPIIGTSFLGTGMMITFMCV), 435–457 (FTNYAASVMAANTVFRSLAGALL), and 475–495 (SLLGFIALAFCALPVIFWIYG).

This sequence belongs to the major facilitator superfamily.

Its subcellular location is the peroxisome membrane. Functionally, MFS-type transporter involved in penicillin production, most likely through the translocation of isopenicillin N from the cytosol to the peroxisomal lumen across the peroxisomal membrane. The polypeptide is MFS-type transporter penM (Penicillium rubens (strain ATCC 28089 / DSM 1075 / NRRL 1951 / Wisconsin 54-1255) (Penicillium chrysogenum)).